Reading from the N-terminus, the 342-residue chain is Epoxide hydrolase srdG (342 aa).

Residues 44-332 (ATVLLLHGWP…LIHTPEEVNK (289 aa)) enclose the AB hydrolase-1 domain. Asp122 functions as the Nucleophile in the catalytic mechanism. The Proton acceptor role is filled by His320.

It belongs to the AB hydrolase superfamily. Epoxide hydrolase family.

Its function is as follows. Highly reducing polyketide synthase; part of the gene cluster that mediates the biosynthesis of sordarial, a salicylic aldehyde structurally related to the phytotoxin pyriculol. The most interesting aspect of this pathway is formation of an aromatic product from the highly reducing polyketide synthase srdA. SrdA synthesizes a reduced polyketide chain from one molecule of acetyl-CoA and five molecules of malonyl-CoA. The polyketide chain is then reductively released as an aldehyde. The oxidoreductases srdC, srdD and srdE then oxidize one of the hydroxy groups to facilitate the intramolecular aldol condensation, followed by dehydration to yield a salicylic aldehyde. This aldehyde can undergo facile reduction by endogenous reductases to yield the alcohol 1-hydroxy-2-hydroxymethyl-3-pent-1,3-dienylbenzene. The flavin-dependent srdI counteract against the propensity of the aldehydes to be reduced under physiological conditions and is responsible for reoxidizing 1-hydroxy-2-hydroxymethyl-3-pent-1,3-dienylbenzene back to the salicylic aldehyde. This salicylic aldehyde is then selectively epoxidized by the cupin-domain-containing oxidoreductase srdB to yield the epoxide, which can be hydrolyzed stereoselectively by the hydrolase srdG to give the final product sordarial. This chain is Epoxide hydrolase srdG, found in Neurospora crassa (strain ATCC 24698 / 74-OR23-1A / CBS 708.71 / DSM 1257 / FGSC 987).